Reading from the N-terminus, the 333-residue chain is Galactinol synthase 5 (333 aa).

Lysine 103 is a catalytic residue. Mn(2+) contacts are provided by aspartate 119, aspartate 121, and histidine 257.

This sequence belongs to the glycosyltransferase 8 family. Galactosyltransferase subfamily. A divalent metal cation serves as cofactor.

It is found in the cytoplasm. The enzyme catalyses myo-inositol + UDP-alpha-D-galactose = alpha-D-galactosyl-(1-&gt;3)-1D-myo-inositol + UDP + H(+). In terms of biological role, galactinol synthase involved in the biosynthesis of raffinose family oligosaccharides (RFOs) that function as osmoprotectants. May promote plant stress tolerance. The protein is Galactinol synthase 5 (GOLS5) of Arabidopsis thaliana (Mouse-ear cress).